The following is a 684-amino-acid chain: Depolymerase 2, capsule K5-specific (684 aa).

This sequence in the N-terminal section; belongs to the Przondovirus depolymerase 2 family. As to quaternary structure, homotrimer. Interacts (via N-terminus) with depolymerase 1 (via N-terminus); this interaction probably gives rise to a branched tailspike.

It is found in the virion. Functions as a receptor binding protein (RBP) and probably mediates the attachment to the host capsular exopolysaccharides. Displays a depolymerase activity that specifically degrades the K5-type polysaccharides of Klebsiella pneumoniae capsule, which allows the phage to reach the host cell membrane and bind the entry receptor. The sequence is that of Depolymerase 2, capsule K5-specific from Klebsiella phage K5-4 (Bacteriophage K5-4).